The primary structure comprises 533 residues: Putative phosphate permease HP_1491 (533 aa).

12 consecutive transmembrane segments (helical) span residues 23–43 (IALALLFLIGAALLALIFGQA), 47–67 (GLLLIFAAVIGGYMAMNIGAN), 81–101 (AISMGGAILIAAICEMLGAII), 129–149 (VMLASLLSGALWLHVATLIGA), 156–176 (SVVGGIMGAGMAAAGMVAVNW), 182–202 (IVASWVISPLMGALIAMFFLM), 221–241 (VVPYLVALMSLTFSWYLIVKV), 248–268 (LNFEIQLACGCILALLIFILF), 286–306 (INELFNVPLIFAAALLSFAHG), 338–358 (VPLWIMVVGAAGIALGLSLYG), 372–392 (LDKMQAFCIALSAVITVLLAS), and 509–529 (LVTVPVSALLGALLFVALGFI).

Belongs to the inorganic phosphate transporter (PiT) (TC 2.A.20) family.

Its subcellular location is the cell membrane. In terms of biological role, potential transporter for phosphate. In Helicobacter pylori (strain ATCC 700392 / 26695) (Campylobacter pylori), this protein is Putative phosphate permease HP_1491.